Consider the following 437-residue polypeptide: UBX domain-containing protein 6 (437 aa).

Disordered regions lie at residues Met1–Gly45 and Glu89–Arg109. Residues Phe7–Lys18 are compositionally biased toward basic residues. The region spanning Glu179–Leu251 is the PUB domain. Residues Tyr332–Val409 form the UBX domain.

In terms of assembly, interacts with cdc-48.1 (via N-terminus) and cdc-48.2 (via N-terminus). In terms of tissue distribution, expressed in the pharynx and some head neurons.

Functionally, probably acts as an adapter for ATPase cdc-48.1 and/or cdc-48.2, conferring substrate specificity. Involved in the lysosomal clearance of cellular material in diet restricted conditions. The sequence is that of UBX domain-containing protein 6 from Caenorhabditis elegans.